Consider the following 257-residue polypeptide: 1-(5-phosphoribosyl)-5-[(5-phosphoribosylamino)methylideneamino] imidazole-4-carboxamide isomerase (257 aa).

Catalysis depends on Asp-8, which acts as the Proton acceptor. The active-site Proton donor is Asp-129.

The protein belongs to the HisA/HisF family.

The protein resides in the cytoplasm. The catalysed reaction is 1-(5-phospho-beta-D-ribosyl)-5-[(5-phospho-beta-D-ribosylamino)methylideneamino]imidazole-4-carboxamide = 5-[(5-phospho-1-deoxy-D-ribulos-1-ylimino)methylamino]-1-(5-phospho-beta-D-ribosyl)imidazole-4-carboxamide. It functions in the pathway amino-acid biosynthesis; L-histidine biosynthesis; L-histidine from 5-phospho-alpha-D-ribose 1-diphosphate: step 4/9. This is 1-(5-phosphoribosyl)-5-[(5-phosphoribosylamino)methylideneamino] imidazole-4-carboxamide isomerase from Gloeothece citriformis (strain PCC 7424) (Cyanothece sp. (strain PCC 7424)).